Reading from the N-terminus, the 75-residue chain is Conotoxin VnMKLT2-012 (75 aa).

Residues 1 to 23 form the signal peptide; sequence MMKLTCVLIIAVLFLTACQLTTA. Residues 24–45 constitute a propeptide that is removed on maturation; sequence ETRDEYRAVRSSDEVRNSRSTR. The segment covering 31–45 has biased composition (basic and acidic residues); sequence AVRSSDEVRNSRSTR. Residues 31-50 are disordered; the sequence is AVRSSDEVRNSRSTRDCSGS. Intrachain disulfides connect cysteine 47–cysteine 60, cysteine 54–cysteine 65, and cysteine 59–cysteine 74.

This sequence belongs to the conotoxin O1 superfamily. In terms of tissue distribution, expressed by the venom duct.

Its subcellular location is the secreted. This is Conotoxin VnMKLT2-012 from Conus ventricosus (Mediterranean cone).